The chain runs to 136 residues: Protein PsiE (136 aa).

4 helical membrane-spanning segments follow: residues 15–35 (ILQTVLNLGLLCLGLILVVFL), 55–75 (YELVEGLVVYFLYFEFIALIV), 82–102 (FHFPLRYFVYIGITAIVRLII), and 108–128 (PLDVLIYSAAILLLVITLWLC).

The protein belongs to the PsiE family.

Its subcellular location is the cell inner membrane. The chain is Protein PsiE from Escherichia coli (strain SE11).